Reading from the N-terminus, the 138-residue chain is Large ribosomal subunit protein uL16 (138 aa).

Residues 1-15 (MLSPRKVKYRKKQRG) are compositionally biased toward basic residues. The segment at 1 to 21 (MLSPRKVKYRKKQRGRLSGEA) is disordered.

This sequence belongs to the universal ribosomal protein uL16 family. Part of the 50S ribosomal subunit.

Functionally, binds 23S rRNA and is also seen to make contacts with the A and possibly P site tRNAs. This Borrelia recurrentis (strain A1) protein is Large ribosomal subunit protein uL16.